A 447-amino-acid polypeptide reads, in one-letter code: Ribosomal protein uS12 methylthiotransferase RimO (447 aa).

Residues 10–120 (PKVGFVSLGC…VVNAVHDVVP (111 aa)) form the MTTase N-terminal domain. Residues cysteine 19, cysteine 55, cysteine 84, cysteine 153, cysteine 157, and cysteine 160 each contribute to the [4Fe-4S] cluster site. Positions 139–377 (LTPRHYAYLK…MAHQQAISAA (239 aa)) constitute a Radical SAM core domain. The 68-residue stretch at 380 to 447 (QMKIGKEIEV…DEYDLWAEML (68 aa)) folds into the TRAM domain.

The protein belongs to the methylthiotransferase family. RimO subfamily. [4Fe-4S] cluster is required as a cofactor.

The protein localises to the cytoplasm. It carries out the reaction L-aspartate(89)-[ribosomal protein uS12]-hydrogen + (sulfur carrier)-SH + AH2 + 2 S-adenosyl-L-methionine = 3-methylsulfanyl-L-aspartate(89)-[ribosomal protein uS12]-hydrogen + (sulfur carrier)-H + 5'-deoxyadenosine + L-methionine + A + S-adenosyl-L-homocysteine + 2 H(+). Catalyzes the methylthiolation of an aspartic acid residue of ribosomal protein uS12. This Pseudomonas savastanoi pv. phaseolicola (strain 1448A / Race 6) (Pseudomonas syringae pv. phaseolicola (strain 1448A / Race 6)) protein is Ribosomal protein uS12 methylthiotransferase RimO.